Reading from the N-terminus, the 147-residue chain is HTH-type transcriptional regulator MntR (147 aa).

Residues 1 to 63 (MPTPSMEDYI…YEKYRGFVLT (63 aa)) enclose the HTH dtxR-type domain. Positions 8, 11, 77, 99, 102, and 103 each coordinate Mn(2+).

Belongs to the DtxR/MntR family. As to quaternary structure, homodimer.

It localises to the cytoplasm. DNA binding is strongly activated by Mn(2+). In terms of biological role, central regulator of manganese homeostasis. The sequence is that of HTH-type transcriptional regulator MntR from Oceanobacillus iheyensis (strain DSM 14371 / CIP 107618 / JCM 11309 / KCTC 3954 / HTE831).